The chain runs to 320 residues: L-lactate dehydrogenase 2 (320 aa).

NAD(+)-binding positions include Ala-18 to Val-19, Asp-40, and Arg-45. Substrate is bound by residues Gln-88, Arg-94, and Asn-126–Asp-129. Residues Ile-124–Asn-126 and Ser-149 contribute to the NAD(+) site. Substrate is bound at residue Asp-154–Arg-157. Beta-D-fructose 1,6-bisphosphate-binding positions include Arg-159 and Lys-171–Tyr-176. The active-site Proton acceptor is His-181. Tyr-228 is modified (phosphotyrosine). Thr-237 is a substrate binding site.

Belongs to the LDH/MDH superfamily. LDH family. As to quaternary structure, homotetramer.

The protein resides in the cytoplasm. It catalyses the reaction (S)-lactate + NAD(+) = pyruvate + NADH + H(+). The protein operates within fermentation; pyruvate fermentation to lactate; (S)-lactate from pyruvate: step 1/1. With respect to regulation, allosterically activated by fructose 1,6-bisphosphate (FBP). In terms of biological role, catalyzes the conversion of lactate to pyruvate. This Bifidobacterium longum subsp. longum (strain ATCC 15707 / DSM 20219 / JCM 1217 / NCTC 11818 / E194b) protein is L-lactate dehydrogenase 2.